The chain runs to 77 residues: Translation initiation factor IF-1, chloroplastic (77 aa).

The S1-like domain occupies 1–71 (MKEQKWIHEG…TRGRIIYRLR (71 aa)).

Belongs to the IF-1 family. Component of the 30S ribosomal translation pre-initiation complex which assembles on the 30S ribosome in the order IF-2 and IF-3, IF-1 and N-formylmethionyl-tRNA(fMet); mRNA recruitment can occur at any time during PIC assembly.

The protein localises to the plastid. Its subcellular location is the chloroplast. Its function is as follows. One of the essential components for the initiation of protein synthesis. Stabilizes the binding of IF-2 and IF-3 on the 30S subunit to which N-formylmethionyl-tRNA(fMet) subsequently binds. Helps modulate mRNA selection, yielding the 30S pre-initiation complex (PIC). Upon addition of the 50S ribosomal subunit IF-1, IF-2 and IF-3 are released leaving the mature 70S translation initiation complex. This is Translation initiation factor IF-1, chloroplastic from Brexia madagascariensis.